A 107-amino-acid chain; its full sequence is Thiosulfate sulfurtransferase GlpE (107 aa).

A Rhodanese domain is found at lysine 19 to lysine 107. Catalysis depends on cysteine 67, which acts as the Cysteine persulfide intermediate.

This sequence belongs to the GlpE family.

The protein localises to the cytoplasm. The enzyme catalyses thiosulfate + hydrogen cyanide = thiocyanate + sulfite + 2 H(+). It carries out the reaction thiosulfate + [thioredoxin]-dithiol = [thioredoxin]-disulfide + hydrogen sulfide + sulfite + 2 H(+). Functionally, transferase that catalyzes the transfer of sulfur from thiosulfate to thiophilic acceptors such as cyanide or dithiols. May function in a CysM-independent thiosulfate assimilation pathway by catalyzing the conversion of thiosulfate to sulfite, which can then be used for L-cysteine biosynthesis. The protein is Thiosulfate sulfurtransferase GlpE of Aliivibrio salmonicida (strain LFI1238) (Vibrio salmonicida (strain LFI1238)).